We begin with the raw amino-acid sequence, 512 residues long: ETS translocation variant 3 (512 aa).

The segment at residues 35 to 116 (IQLWHFILEL…KGKRFTYKFN (82 aa)) is a DNA-binding region (ETS). The tract at residues 136 to 222 (VPQSAPPVPT…NAIGGGGIGH (87 aa)) is disordered. 3 positions are modified to phosphoserine: serine 139, serine 159, and serine 315. Positions 158 to 184 (HSPTNDVQPGRFSASSLTASGQESSNG) are enriched in polar residues. The disordered stretch occupies residues 336–512 (PEESTQFSIK…QGLATAAADA (177 aa)). Residues 380-406 (IKVEPASEKDPESLRQSAREKEEHTQE) are compositionally biased toward basic and acidic residues. Lysine 381 is covalently cross-linked (Glycyl lysine isopeptide (Lys-Gly) (interchain with G-Cter in SUMO2)). N6-acetyllysine; alternate is present on lysine 388. Lysine 388 participates in a covalent cross-link: Glycyl lysine isopeptide (Lys-Gly) (interchain with G-Cter in SUMO2); alternate. Over residues 443–452 (EPLEVTEDIE) the composition is skewed to acidic residues. Basic and acidic residues-rich tracts occupy residues 453-468 (DRPG…KEDA) and 479-491 (RWND…ELSK).

It belongs to the ETS family.

The protein resides in the nucleus. Its function is as follows. Transcriptional repressor that contribute to growth arrest during terminal macrophage differentiation by repressing target genes involved in Ras-dependent proliferation. Represses MMP1 promoter activity. The chain is ETS translocation variant 3 (ETV3) from Pan troglodytes (Chimpanzee).